Consider the following 455-residue polypeptide: Polyadenylation factor subunit 2 (455 aa).

7 WD repeats span residues 80-119 (KVKH…FETI), 122-162 (AHDT…KELD), 164-203 (IHTE…QERV), 206-245 (GHHW…CVST), 248-288 (KFKH…NELM), 291-331 (RDEV…EKPI), and 337-376 (AHEK…DPNA). Disordered stretches follow at residues 406 to 425 (EYGA…TQYN) and 430 to 455 (RVPE…GLSI). The segment covering 432–446 (PEIKEPTPTTDKEQR) has biased composition (basic and acidic residues).

The protein localises to the nucleus. In terms of biological role, required for 3'-end cleavage and polyadenylation of pre-mRNAs. Also involved in chromosome segregation where it has a role in chromosome attachment to the mitotic spindle. This Candida glabrata (strain ATCC 2001 / BCRC 20586 / JCM 3761 / NBRC 0622 / NRRL Y-65 / CBS 138) (Yeast) protein is Polyadenylation factor subunit 2 (PFS2).